A 1537-amino-acid chain; its full sequence is Dual oxidase (1537 aa).

The disordered stretch occupies residues 1–29 (MSVPSAPHQRAESKNRVPRPGQKNRKLPK). Residues 1-626 (MSVPSAPHQR…EGYDYFSGSE (626 aa)) lie on the Extracellular side of the membrane. Residues 63 to 628 (MYSQTEKQRY…YDYFSGSELM (566 aa)) are peroxidase-like; mediates peroxidase activity. 4 N-linked (GlcNAc...) asparagine glycosylation sites follow: Asn-133, Asn-233, Asn-577, and Asn-606. The helical transmembrane segment at 627 to 647 (LMFIYVCVFLGFVPILCAGAG) threads the bilayer. Over 648–1029 (YCVVKLQNSK…ITFLEENRQN (382 aa)) the chain is Cytoplasmic. At Ser-826 the chain carries Phosphoserine. 3 EF-hand domains span residues 855–890 (PNDM…FSRG), 891–926 (KTDD…LVEI), and 936–971 (QVTE…YKGD). 9 residues coordinate Ca(2+): Asp-868, Asp-870, Asp-872, Arg-874, Glu-879, Asp-904, Asp-906, Asn-908, and Glu-915. Residues 1030–1050 (IFYLFLFYVVTIVLFVERFIH) traverse the membrane as a helical segment. At 1051–1065 (YSFMAEHTDLRHIMG) the chain is on the extracellular side. A helical transmembrane segment spans residues 1066–1086 (VGIAITRGSAASLSFCYSLLL). The Ferric oxidoreductase domain occupies 1078–1218 (LSFCYSLLLL…TLYIGLYLLS (141 aa)). Residues 1087–1116 (LTMSRNLITKLKEFPIQQYIPLDSHIQFHK) are Cytoplasmic-facing. Tyr-1105 is modified (phosphotyrosine). Residues 1117–1137 (IAACTALFFSVLHTVGHIVNF) form a helical membrane-spanning segment. Over 1138–1171 (YHVSTQSHENLRCLTREVHFASDYKPDITFWLFQ) the chain is Extracellular. The helical transmembrane segment at 1172–1192 (TVTGTTGVMLFIIMCIIFVFA) threads the bilayer. Residues 1193–1202 (HPTIRKKAYN) lie on the Cytoplasmic side of the membrane. The helical transmembrane segment at 1203–1223 (FFWNMHTLYIGLYLLSLIHGL) threads the bilayer. At 1224–1230 (ARLTGPP) the chain is on the extracellular side. A helical transmembrane segment spans residues 1231–1251 (RFWMFFLGPGIVYTLDKIVSL). Over 1252–1537 (RTKYMALDVI…YFIHHFENFG (286 aa)) the chain is Cytoplasmic. Residues 1253–1358 (TKYMALDVID…EGPFGGGNQD (106 aa)) enclose the FAD-binding FR-type domain.

This sequence in the N-terminal section; belongs to the peroxidase family.

It localises to the membrane. The enzyme catalyses NADH + O2 + H(+) = H2O2 + NAD(+). It carries out the reaction NADPH + O2 + H(+) = H2O2 + NADP(+). With respect to regulation, peroxidase activity is inhibited by aminotriazole and azide. In terms of biological role, plays a role in innate immunity limiting microbial proliferation in the gut. Acts downstream of a hh-signaling pathway to induce the production of reactive oxygen species (ROS) in response to intestinal bacterial infection. May generate antimicrobial oxidative burst through its peroxidase-like domain. This chain is Dual oxidase (Duox), found in Drosophila melanogaster (Fruit fly).